The chain runs to 695 residues: Follicle-stimulating hormone receptor (695 aa).

The first 17 residues, 1-17 (MALFLVALLAFLSLGSG), serve as a signal peptide directing secretion. 2 disulfide bridges follow: Cys18–Cys25 and Cys23–Cys32. Residues 18 to 46 (CHHRLCHCSNGVFLCQDSKVTEMPSDLPR) enclose the LRRNT domain. The Extracellular portion of the chain corresponds to 18 to 366 (CHHRLCHCSN…EDIMGYDILR (349 aa)). LRR repeat units follow at residues 48–70 (AVEL…SGFG), 71–93 (DLEK…VFSN), 96–118 (KLHE…AFQN), 121–142 (NLRY…HKIQ), 143–167 (SLQK…SFMG), 171–192 (ESMI…AFNG), 194–216 (QLDE…VFQG), 219–239 (GPVI…YGLE), and 240–262 (NLKK…EKFV). 2 N-linked (GlcNAc...) asparagine glycosylation sites follow: Asn191 and Asn199. 4 cysteine pairs are disulfide-bonded: Cys275-Cys346, Cys276-Cys292, Cys276-Cys356, and Cys292-Cys338. An N-linked (GlcNAc...) asparagine glycan is attached at Asn293. A Sulfotyrosine modification is found at Tyr335. The chain crosses the membrane as a helical span at residues 367-387 (VLIWFISILAITGNILVLVIL). Residues 388-398 (ITSQYKLTVPR) are Cytoplasmic-facing. Residues 399–421 (FLMCNLAFADLCIGIYLLLIASV) form a helical membrane-spanning segment. The Extracellular portion of the chain corresponds to 422–443 (DVHTKSQYHNYAIDWQTGAGCD). Residues Cys442 and Cys517 are joined by a disulfide bond. Residues 444–465 (AAGFFTVFASELSVYTLTAITL) traverse the membrane as a helical segment. The Cytoplasmic segment spans residues 466 to 485 (ERWHTITHAMQLECKVHVRH). A helical membrane pass occupies residues 486 to 508 (AASIMLVGWVFAFAVALFPIFGI). Over 509–528 (SSYMKVSICLPMDIDSPLSQ) the chain is Extracellular. Residues 529 to 550 (LYVMSLLVLNVLAFVVICGCYT) traverse the membrane as a helical segment. The Cytoplasmic segment spans residues 551–573 (HIYLTVRNPNITSSSSDTKIAKR). The helical transmembrane segment at 574 to 597 (MAMLIFTDFLCMAPISFFAISASL) threads the bilayer. Residues 598-608 (KVPLITVSKSK) lie on the Extracellular side of the membrane. Residues 609–630 (ILLVLFYPINSCANPFLYAIFT) traverse the membrane as a helical segment. The Cytoplasmic segment spans residues 631-695 (RNFRRDFFIL…LIPLRHLAKN (65 aa)).

Belongs to the G-protein coupled receptor 1 family. FSH/LSH/TSH subfamily. Homotrimer. Functions as a homotrimer binding the FSH hormone heterodimer composed of CGA and FSHB. Interacts with ARRB2. Interacts with APPL2; interaction is independent of follicle stimulating hormone stimulation. In terms of processing, N-glycosylated; indirectly required for FSH-binding, possibly via a conformational change that allows high affinity binding of hormone. Post-translationally, sulfated. In terms of tissue distribution, isoform FSH-R3 is expressed in ovary and testis, but not in kidney (at protein level).

The protein resides in the cell membrane. Its function is as follows. G protein-coupled receptor for follitropin, the follicle-stimulating hormone. The activity of isoform FSH-R1 is mediated by G proteins which activate adenylate cyclase. Isoform FSH-R2 and isoform FSH-R3 also bind FSH, but this does not result in activation of adenylate cyclase. Isoform FSH-R3 may be involved in calcium signaling. Through cAMP production activates the downstream PI3K-AKT and ERK1/ERK2 signaling pathways. This is Follicle-stimulating hormone receptor (FSHR) from Ovis aries (Sheep).